The primary structure comprises 422 residues: Glutamyl-tRNA reductase (422 aa).

Substrate-binding positions include 49-52 (TCNR), serine 107, 112-114 (EPQ), and glutamine 118. The active-site Nucleophile is cysteine 50. An NADP(+)-binding site is contributed by 187-192 (GAGETI).

Belongs to the glutamyl-tRNA reductase family. Homodimer.

It catalyses the reaction (S)-4-amino-5-oxopentanoate + tRNA(Glu) + NADP(+) = L-glutamyl-tRNA(Glu) + NADPH + H(+). The protein operates within porphyrin-containing compound metabolism; protoporphyrin-IX biosynthesis; 5-aminolevulinate from L-glutamyl-tRNA(Glu): step 1/2. Its function is as follows. Catalyzes the NADPH-dependent reduction of glutamyl-tRNA(Glu) to glutamate 1-semialdehyde (GSA). The polypeptide is Glutamyl-tRNA reductase (Pseudomonas paraeruginosa (strain DSM 24068 / PA7) (Pseudomonas aeruginosa (strain PA7))).